The sequence spans 418 residues: Ciliary microtubule-associated protein 2 (418 aa).

Sperm.

This is Ciliary microtubule-associated protein 2 from Homo sapiens (Human).